A 144-amino-acid polypeptide reads, in one-letter code: Ribonuclease VapC1 (144 aa).

Residues Val-6–Leu-132 form the PINc domain. Asp-9 and Asp-102 together coordinate Mg(2+).

It belongs to the PINc/VapC protein family. The cofactor is Mg(2+).

Toxic component of a type II toxin-antitoxin (TA) system. An RNase. The chain is Ribonuclease VapC1 from Aquifex aeolicus (strain VF5).